A 134-amino-acid chain; its full sequence is Small ribosomal subunit protein uS11 (134 aa).

Residues 115-134 (TPIPHNGTRPPKKVLKRDLK) are disordered. A compositionally biased stretch (basic residues) spans 124-134 (PPKKVLKRDLK).

It belongs to the universal ribosomal protein uS11 family. As to quaternary structure, part of the 30S ribosomal subunit. Interacts with proteins S7 and S18. Binds to IF-3.

In terms of biological role, located on the platform of the 30S subunit, it bridges several disparate RNA helices of the 16S rRNA. Forms part of the Shine-Dalgarno cleft in the 70S ribosome. This chain is Small ribosomal subunit protein uS11, found in Mycoplasma mobile (strain ATCC 43663 / 163K / NCTC 11711) (Mesomycoplasma mobile).